Reading from the N-terminus, the 372-residue chain is Ketol-acid reductoisomerase (NADP(+)) (372 aa).

Residues 1 to 25 are disordered; sequence MTETKTQTETETDEEEGTDTDTALD. Over residues 10-19 the composition is skewed to acidic residues; sequence TETDEEEGTD. One can recognise a KARI N-terminal Rossmann domain in the interval 24-205; the sequence is LDTTIYYDDD…GCTRAGAIET (182 aa). NADP(+) contacts are provided by residues 49-52, serine 75, serine 77, and 107-110; these read YGSQ and DTVQ. The active site involves histidine 131. Glycine 157 lines the NADP(+) pocket. The region spanning 206 to 351 is the KARI C-terminal knotted domain; sequence TFREETETDL…EPLRDLFAWS (146 aa). The Mg(2+) site is built by aspartate 214, glutamate 218, glutamate 250, and glutamate 254. Serine 275 lines the substrate pocket. Residues 351–372 are disordered; the sequence is SDNEETNDESDVVSEPEAAADD. Residues 352 to 372 show a composition bias toward acidic residues; sequence DNEETNDESDVVSEPEAAADD.

Belongs to the ketol-acid reductoisomerase family. The cofactor is Mg(2+).

It carries out the reaction (2R)-2,3-dihydroxy-3-methylbutanoate + NADP(+) = (2S)-2-acetolactate + NADPH + H(+). The catalysed reaction is (2R,3R)-2,3-dihydroxy-3-methylpentanoate + NADP(+) = (S)-2-ethyl-2-hydroxy-3-oxobutanoate + NADPH + H(+). Its pathway is amino-acid biosynthesis; L-isoleucine biosynthesis; L-isoleucine from 2-oxobutanoate: step 2/4. It functions in the pathway amino-acid biosynthesis; L-valine biosynthesis; L-valine from pyruvate: step 2/4. In terms of biological role, involved in the biosynthesis of branched-chain amino acids (BCAA). Catalyzes an alkyl-migration followed by a ketol-acid reduction of (S)-2-acetolactate (S2AL) to yield (R)-2,3-dihydroxy-isovalerate. In the isomerase reaction, S2AL is rearranged via a Mg-dependent methyl migration to produce 3-hydroxy-3-methyl-2-ketobutyrate (HMKB). In the reductase reaction, this 2-ketoacid undergoes a metal-dependent reduction by NADPH to yield (R)-2,3-dihydroxy-isovalerate. The chain is Ketol-acid reductoisomerase (NADP(+)) from Haloquadratum walsbyi (strain DSM 16790 / HBSQ001).